The chain runs to 81 residues: Acyl carrier protein (81 aa).

The region spanning 4–79 (AEIKDKVYDI…QAIDYIVNKK (76 aa)) is the Carrier domain. Ser39 is modified (O-(pantetheine 4'-phosphoryl)serine).

This sequence belongs to the acyl carrier protein (ACP) family. Post-translationally, 4'-phosphopantetheine is transferred from CoA to a specific serine of apo-ACP by AcpS. This modification is essential for activity because fatty acids are bound in thioester linkage to the sulfhydryl of the prosthetic group.

Its subcellular location is the cytoplasm. Its pathway is lipid metabolism; fatty acid biosynthesis. Functionally, carrier of the growing fatty acid chain in fatty acid biosynthesis. In Chlorobaculum tepidum (strain ATCC 49652 / DSM 12025 / NBRC 103806 / TLS) (Chlorobium tepidum), this protein is Acyl carrier protein.